The chain runs to 413 residues: Multifunctional CCA protein (413 aa).

ATP is bound by residues Gly8 and Arg11. 2 residues coordinate CTP: Gly8 and Arg11. Mg(2+) contacts are provided by Asp21 and Asp23. Arg91, Arg137, and Arg140 together coordinate ATP. Positions 91, 137, and 140 each coordinate CTP. In terms of domain architecture, HD spans 228 to 329 (TGIHTLMTLS…VKLFDNIDAW (102 aa)).

It belongs to the tRNA nucleotidyltransferase/poly(A) polymerase family. Bacterial CCA-adding enzyme type 1 subfamily. As to quaternary structure, monomer. Can also form homodimers and oligomers. Mg(2+) serves as cofactor. Ni(2+) is required as a cofactor.

The catalysed reaction is a tRNA precursor + 2 CTP + ATP = a tRNA with a 3' CCA end + 3 diphosphate. It carries out the reaction a tRNA with a 3' CCA end + 2 CTP + ATP = a tRNA with a 3' CCACCA end + 3 diphosphate. Functionally, catalyzes the addition and repair of the essential 3'-terminal CCA sequence in tRNAs without using a nucleic acid template. Adds these three nucleotides in the order of C, C, and A to the tRNA nucleotide-73, using CTP and ATP as substrates and producing inorganic pyrophosphate. tRNA 3'-terminal CCA addition is required both for tRNA processing and repair. Also involved in tRNA surveillance by mediating tandem CCA addition to generate a CCACCA at the 3' terminus of unstable tRNAs. While stable tRNAs receive only 3'-terminal CCA, unstable tRNAs are marked with CCACCA and rapidly degraded. In Enterobacter sp. (strain 638), this protein is Multifunctional CCA protein.